Reading from the N-terminus, the 93-residue chain is Histone H2B (93 aa).

Low complexity predominate over residues 1–12; the sequence is MPEPAKSAPAPK. The disordered stretch occupies residues 1 to 31; sequence MPEPAKSAPAPKKGSKKAVTKTQKKGDKKRX. Lys-6 and Lys-13 each carry N6-acetyllysine. The span at 13–28 shows a compositional bias: basic residues; sequence KGSKKAVTKTQKKGDK. Ser-15 is subject to Phosphoserine. N6-acetyllysine is present on residues Lys-16 and Lys-21.

The protein belongs to the histone H2B family. In terms of assembly, the nucleosome is a histone octamer containing two molecules each of H2A, H2B, H3 and H4 assembled in one H3-H4 heterotetramer and two H2A-H2B heterodimers. The octamer wraps approximately 147 bp of DNA. Monoubiquitination at the C-terminal Lys gives a specific tag for epigenetic transcriptional activation and is also prerequisite for histone H3 'Lys-4' and 'Lys-79' methylation. In terms of processing, phosphorylated on Ser-15 during apoptosis; which facilitates apoptotic chromatin condensation.

It localises to the nucleus. Its subcellular location is the chromosome. Core component of nucleosome. Nucleosomes wrap and compact DNA into chromatin, limiting DNA accessibility to the cellular machineries which require DNA as a template. Histones thereby play a central role in transcription regulation, DNA repair, DNA replication and chromosomal stability. DNA accessibility is regulated via a complex set of post-translational modifications of histones, also called histone code, and nucleosome remodeling. The chain is Histone H2B from Crocodylus niloticus (Nile crocodile).